The primary structure comprises 343 residues: Lipase chaperone (343 aa).

A helical transmembrane segment spans residues 7–27; sequence IYLGIGLVALLMIFIYWLMPK.

This sequence belongs to the lipase chaperone family.

It is found in the cell inner membrane. Functionally, may be involved in the folding of the extracellular lipase during its passage through the periplasm. This is Lipase chaperone (lifO) from Acinetobacter baylyi (strain ATCC 33305 / BD413 / ADP1).